Reading from the N-terminus, the 208-residue chain is MIGKLKGIVDSYGEDFVILDVNGVGYVVHCSARTLQRLPKPGEATDLAIETHVREDMIRLYGFRSDAEREWFRLLQTVQGVGTRVALGVLSVLEPAQLATAIATGDKGAVARAPGVGPRLAARLVAELKDKAPAFAPVDPALVALTGAVEDRTAPQPVADAISALVNLGYPQVQASAAIAAALKGLGDGAETVEAKTLIRLGLRELAR.

The domain I stretch occupies residues Met-1 to Arg-64. A domain II region spans residues Ser-65 to Val-143. Residues Ala-144 to Arg-152 are flexible linker. Positions Thr-153–Arg-208 are domain III.

It belongs to the RuvA family. As to quaternary structure, homotetramer. Forms an RuvA(8)-RuvB(12)-Holliday junction (HJ) complex. HJ DNA is sandwiched between 2 RuvA tetramers; dsDNA enters through RuvA and exits via RuvB. An RuvB hexamer assembles on each DNA strand where it exits the tetramer. Each RuvB hexamer is contacted by two RuvA subunits (via domain III) on 2 adjacent RuvB subunits; this complex drives branch migration. In the full resolvosome a probable DNA-RuvA(4)-RuvB(12)-RuvC(2) complex forms which resolves the HJ.

The protein localises to the cytoplasm. The RuvA-RuvB-RuvC complex processes Holliday junction (HJ) DNA during genetic recombination and DNA repair, while the RuvA-RuvB complex plays an important role in the rescue of blocked DNA replication forks via replication fork reversal (RFR). RuvA specifically binds to HJ cruciform DNA, conferring on it an open structure. The RuvB hexamer acts as an ATP-dependent pump, pulling dsDNA into and through the RuvAB complex. HJ branch migration allows RuvC to scan DNA until it finds its consensus sequence, where it cleaves and resolves the cruciform DNA. The polypeptide is Holliday junction branch migration complex subunit RuvA (Methylorubrum populi (strain ATCC BAA-705 / NCIMB 13946 / BJ001) (Methylobacterium populi)).